Here is a 1314-residue protein sequence, read N- to C-terminus: E3 ubiquitin-protein ligase RNF123 (1314 aa).

Alanine 2 bears the N-acetylalanine mark. Positions 74–254 (VDSEDEESQG…VAFNFGSRPL (181 aa)) constitute a B30.2/SPRY domain. The disordered stretch occupies residues 460–481 (HRSSREGKDSAEDRAEAAEERP). Positions 462–481 (SSREGKDSAEDRAEAAEERP) are enriched in basic and acidic residues. Residue serine 675 is modified to Phosphoserine. Arginine 683 is modified (asymmetric dimethylarginine). Positions 968–974 (WILVRLW) are interaction with NFKB1. Residues cysteine 1254, cysteine 1257, cysteine 1269, histidine 1271, cysteine 1274, cysteine 1277, cysteine 1288, and cysteine 1291 each contribute to the Zn(2+) site. The segment at 1254–1292 (CPICYAHPISAVFQPCGHKSCKACIDQHLMNNKDCFFCK) adopts an RING-type zinc-finger fold.

As to quaternary structure, component of the KPC complex composed of RNF123/KPC1 and UBAC1/KPC2. Interacts with UBAC1 and CDKN1B via its N-terminal domain. Interacts with RIGI (via N-terminus) and IFIH1 (via N-terminus). Post-translationally, ubiquitinated, leading to its degradation. Deubiquitinated by USP19, thereby stimulating CDKN1B ubiquitin-dependent degradation.

It localises to the cytoplasm. The catalysed reaction is S-ubiquitinyl-[E2 ubiquitin-conjugating enzyme]-L-cysteine + [acceptor protein]-L-lysine = [E2 ubiquitin-conjugating enzyme]-L-cysteine + N(6)-ubiquitinyl-[acceptor protein]-L-lysine.. It functions in the pathway protein modification; protein ubiquitination. Functionally, catalytic subunit of the KPC complex that acts as E3 ubiquitin-protein ligase. Promotes the ubiquitination and proteasome-mediated degradation of CDKN1B which is the cyclin-dependent kinase inhibitor at the G0-G1 transition of the cell cycle. Also acts as a key regulator of the NF-kappa-B signaling by promoting maturation of the NFKB1 component of NF-kappa-B. Acts by catalyzing ubiquitination of the NFKB1 p105 precursor, leading to limited proteasomal degradation of NFKB1 p105 and generation of the active NFKB1 p50 subunit. Functions also as an inhibitor of innate antiviral signaling mediated by RIGI and IFIH1 independently of its E3 ligase activity. Interacts with the N-terminal CARD domains of RIGI and IFIH1 and competes with the downstream adapter MAVS. The sequence is that of E3 ubiquitin-protein ligase RNF123 from Oryctolagus cuniculus (Rabbit).